We begin with the raw amino-acid sequence, 134 residues long: Major capsid protein (134 aa).

As to quaternary structure, homodimer.

The protein resides in the virion. Self-assembles to form a helical, filamentous nucleocapsid. The capsid proteins wrap around the DNA and maintain it in an A-form by non-specific desolvation and specific coordination of the DNA phosphate groups by positively charged residues. This certainly protects the viral DNA under conditions such as the extreme desiccation of its host. The sequence is that of Major capsid protein from Saccharolobus islandicus (Sulfolobus islandicus).